The sequence spans 430 residues: Tol-Pal system protein TolB (430 aa).

An N-terminal signal peptide occupies residues M1 to A19.

The protein belongs to the TolB family. As to quaternary structure, the Tol-Pal system is composed of five core proteins: the inner membrane proteins TolA, TolQ and TolR, the periplasmic protein TolB and the outer membrane protein Pal. They form a network linking the inner and outer membranes and the peptidoglycan layer.

It localises to the periplasm. In terms of biological role, part of the Tol-Pal system, which plays a role in outer membrane invagination during cell division and is important for maintaining outer membrane integrity. In Hahella chejuensis (strain KCTC 2396), this protein is Tol-Pal system protein TolB.